The following is a 283-amino-acid chain: Polyamine aminopropyltransferase (283 aa).

The region spanning Thr5–Lys238 is the PABS domain. Gln32 is an S-methyl-5'-thioadenosine binding site. Spermidine is bound by residues His63 and Asp87. Residues Glu107 and Asp139–Gly140 each bind S-methyl-5'-thioadenosine. Asp158 (proton acceptor) is an active-site residue. Spermidine is bound at residue Asp158–Asp161.

This sequence belongs to the spermidine/spermine synthase family. In terms of assembly, homodimer or homotetramer.

Its subcellular location is the cytoplasm. It catalyses the reaction S-adenosyl 3-(methylsulfanyl)propylamine + putrescine = S-methyl-5'-thioadenosine + spermidine + H(+). It participates in amine and polyamine biosynthesis; spermidine biosynthesis; spermidine from putrescine: step 1/1. Catalyzes the irreversible transfer of a propylamine group from the amino donor S-adenosylmethioninamine (decarboxy-AdoMet) to putrescine (1,4-diaminobutane) to yield spermidine. This is Polyamine aminopropyltransferase from Prochlorococcus marinus (strain MIT 9515).